A 205-amino-acid polypeptide reads, in one-letter code: MMLITTHSLLLLLLLLQLLQPLQFQEAYYEDFYFPAYRDKEDFEDFMVEFQSTGPTRPPTKEKVKRRILVNPGMPLGDSGYCNYQIMRKNVYYKYSCVTEHYFLLMQYDELQKTCYNRFVPCKNGIRKCNMSKKLVEGVYCNLTKASNIPLCQYNSFYRRGYVLITCTWQNEMQKLIPYTINDLVEPPEHTKSFLNEDGVFVVPP.

An N-terminal signal peptide occupies residues 1 to 24; that stretch reads MMLITTHSLLLLLLLLQLLQPLQF. Cystine bridges form between Cys-97–Cys-152, Cys-115–Cys-167, and Cys-122–Cys-129. Residues Asn-130 and Asn-142 are each glycosylated (N-linked (GlcNAc...) asparagine).

This sequence belongs to the pancreatic ribonuclease family.

It is found in the secreted. Does not exhibit any ribonuclease activity. The sequence is that of Inactive ribonuclease-like protein 9 (RNASE9) from Cebus capucinus (White-faced sapajou).